The following is a 142-amino-acid chain: Large ribosomal subunit protein uL13 (142 aa).

This sequence belongs to the universal ribosomal protein uL13 family. In terms of assembly, part of the 50S ribosomal subunit.

Functionally, this protein is one of the early assembly proteins of the 50S ribosomal subunit, although it is not seen to bind rRNA by itself. It is important during the early stages of 50S assembly. The sequence is that of Large ribosomal subunit protein uL13 from Haemophilus influenzae (strain PittGG).